Here is a 177-residue protein sequence, read N- to C-terminus: MSRVGKLPITIPEGVKIGLNDLEVKISGPKGELSKTFKGNIAISLVENKLLVKPLAANKNARAMWGTARSIISNMVTGVKEGFKLKLEINGVGYRAMVKGKYLNLMLAKSHNTKIEIPSDIKIEMPKQNIIILEGTDKEKLGQFASIIIKQRPPEPYKGKGIKFENQFIPRKEGKKN.

The protein belongs to the universal ribosomal protein uL6 family. Part of the 50S ribosomal subunit.

Its function is as follows. This protein binds to the 23S rRNA, and is important in its secondary structure. It is located near the subunit interface in the base of the L7/L12 stalk, and near the tRNA binding site of the peptidyltransferase center. The sequence is that of Large ribosomal subunit protein uL6 from Rickettsia massiliae (strain Mtu5).